A 532-amino-acid chain; its full sequence is Phosphoenolpyruvate carboxykinase (ATP) (532 aa).

Substrate is bound by residues Arg-60, Tyr-194, and Lys-200. Residues Lys-200, His-219, and 237 to 245 (GLSGTGKTT) each bind ATP. The Mn(2+) site is built by Lys-200 and His-219. Asp-258 provides a ligand contact to Mn(2+). Residues Glu-286, Arg-324, and Thr-449 each coordinate ATP. Arg-324 serves as a coordination point for substrate.

This sequence belongs to the phosphoenolpyruvate carboxykinase (ATP) family. Mn(2+) is required as a cofactor.

The protein resides in the cytoplasm. It carries out the reaction oxaloacetate + ATP = phosphoenolpyruvate + ADP + CO2. It participates in carbohydrate biosynthesis; gluconeogenesis. Its function is as follows. Involved in the gluconeogenesis. Catalyzes the conversion of oxaloacetate (OAA) to phosphoenolpyruvate (PEP) through direct phosphoryl transfer between the nucleoside triphosphate and OAA. This Cereibacter sphaeroides (strain ATCC 17025 / ATH 2.4.3) (Rhodobacter sphaeroides) protein is Phosphoenolpyruvate carboxykinase (ATP).